The primary structure comprises 311 residues: Giardin subunit alpha-8 (311 aa).

Annexin repeat units lie at residues 5-73 (RKAY…IRCW), 75-146 (NRHE…DRWM), 154-223 (NNVK…AAHY), and 227-295 (EPSK…SLWR).

It belongs to the annexin family. Giardin subunit alpha subfamily.

The protein resides in the cytoplasm. It is found in the cytoskeleton. Its function is as follows. Giardins are involved in parasite attachment to the intestinal mucosa and in the cytoskeletal disassembly and reassembly that marks the transition from infectious trophozoite to transmissible cyst. They may interact with other cytoskeletal proteins such as microtubules in the microribbons or crossbridges, to maintain the integrity of the ventral disk. The chain is Giardin subunit alpha-8 from Giardia intestinalis (Giardia lamblia).